Reading from the N-terminus, the 224-residue chain is Dimethyl sulfoxide reductase transcriptional activator (224 aa).

Residues 158-209 enclose the HTH bat-type domain; the sequence is LTDKQREAAAAAVAKGYYATPRGADLSDLATALGISKSAVSQRLSAVESKLA.

Its function is as follows. Involved in activating dmsEABCD gene expression related to dimethyl sulfoxide (DMSO) reductase. Required for anaerobic respiration on dimethyl sulfoxide (DMSO) and trimethylamine N-oxide (TMAO). The chain is Dimethyl sulfoxide reductase transcriptional activator (dmsR) from Halobacterium salinarum (strain ATCC 700922 / JCM 11081 / NRC-1) (Halobacterium halobium).